We begin with the raw amino-acid sequence, 378 residues long: D-alanine--D-alanine ligase (378 aa).

Positions 157 to 368 constitute an ATP-grasp domain; the sequence is KVVFESAGLS…YGDLIDELIH (212 aa). An ATP-binding site is contributed by 189–244; the sequence is VDKLGFPVFVKPARAGSSMGISKVDSMEGLDAAIDEARRHDLKLVIEAGIVGREIE. Mg(2+) is bound by residues Asp-322, Glu-335, and Asn-337.

This sequence belongs to the D-alanine--D-alanine ligase family. Mg(2+) is required as a cofactor. The cofactor is Mn(2+).

Its subcellular location is the cytoplasm. The catalysed reaction is 2 D-alanine + ATP = D-alanyl-D-alanine + ADP + phosphate + H(+). Its pathway is cell wall biogenesis; peptidoglycan biosynthesis. Cell wall formation. This chain is D-alanine--D-alanine ligase, found in Paenarthrobacter aurescens (strain TC1).